The sequence spans 365 residues: Peptide chain release factor 2 (365 aa).

Q251 is modified (N5-methylglutamine).

Belongs to the prokaryotic/mitochondrial release factor family. Methylated by PrmC. Methylation increases the termination efficiency of RF2.

The protein localises to the cytoplasm. In terms of biological role, peptide chain release factor 2 directs the termination of translation in response to the peptide chain termination codons UGA and UAA. In Campylobacter jejuni (strain RM1221), this protein is Peptide chain release factor 2.